Reading from the N-terminus, the 123-residue chain is Large ribosomal subunit protein uL14 (123 aa).

Belongs to the universal ribosomal protein uL14 family. Part of the 50S ribosomal subunit. Forms a cluster with proteins L3 and L19. In the 70S ribosome, L14 and L19 interact and together make contacts with the 16S rRNA in bridges B5 and B8.

Its function is as follows. Binds to 23S rRNA. Forms part of two intersubunit bridges in the 70S ribosome. The chain is Large ribosomal subunit protein uL14 from Escherichia coli O139:H28 (strain E24377A / ETEC).